Consider the following 75-residue polypeptide: Small ribosomal subunit protein bS18 (75 aa).

The protein belongs to the bacterial ribosomal protein bS18 family. Part of the 30S ribosomal subunit. Forms a tight heterodimer with protein bS6.

Binds as a heterodimer with protein bS6 to the central domain of the 16S rRNA, where it helps stabilize the platform of the 30S subunit. In Shewanella denitrificans (strain OS217 / ATCC BAA-1090 / DSM 15013), this protein is Small ribosomal subunit protein bS18.